The following is a 656-amino-acid chain: Membrane-associated tyrosine- and threonine-specific cdc2-inhibitory kinase wee-1.3 (656 aa).

The segment covering methionine 1–aspartate 11 has biased composition (polar residues). Positions methionine 1 to alanine 24 are disordered. Positions phenylalanine 107–isoleucine 354 constitute a Protein kinase domain. ATP-binding positions include isoleucine 113 to valine 121 and lysine 136. Aspartate 227 (proton acceptor) is an active-site residue. Residues asparagine 232 and aspartate 245 each contribute to the Mg(2+) site. Disordered stretches follow at residues proline 449–isoleucine 552 and lysine 617–asparagine 656. Positions alanine 486–serine 505 are enriched in polar residues. Over residues lysine 617 to glutamine 631 the composition is skewed to basic and acidic residues. A compositionally biased stretch (polar residues) spans alanine 646 to asparagine 656.

Belongs to the protein kinase superfamily. Ser/Thr protein kinase family. WEE1 subfamily.

Its subcellular location is the golgi apparatus membrane. The protein resides in the cytoplasm. It catalyses the reaction L-seryl-[protein] + ATP = O-phospho-L-seryl-[protein] + ADP + H(+). The catalysed reaction is L-threonyl-[protein] + ATP = O-phospho-L-threonyl-[protein] + ADP + H(+). Its function is as follows. Acts as a negative regulator of entry into mitosis (G2 to M transition) by phosphorylation of the CDK1 kinase during oocyte maturation. Required for embryonic development, germline proliferation and initiation of meiosis during spermatogenesis. Required for chromosome structure during mitosis and negative regulation of nuclear envelope breakdown. The sequence is that of Membrane-associated tyrosine- and threonine-specific cdc2-inhibitory kinase wee-1.3 from Caenorhabditis briggsae.